The primary structure comprises 491 residues: 2,3-bisphosphoglycerate-independent phosphoglycerate mutase (491 aa).

Positions 11 and 61 each coordinate Mn(2+). Serine 61 (phosphoserine intermediate) is an active-site residue. Residues histidine 118, 147–148 (RD), arginine 177, arginine 183, 248–251 (RSDR), and lysine 320 contribute to the substrate site. The Mn(2+) site is built by aspartate 386, histidine 390, aspartate 427, histidine 428, and histidine 445.

It belongs to the BPG-independent phosphoglycerate mutase family. As to quaternary structure, monomer. Mn(2+) is required as a cofactor.

It carries out the reaction (2R)-2-phosphoglycerate = (2R)-3-phosphoglycerate. Its pathway is carbohydrate degradation; glycolysis; pyruvate from D-glyceraldehyde 3-phosphate: step 3/5. In terms of biological role, catalyzes the interconversion of 2-phosphoglycerate and 3-phosphoglycerate. The protein is 2,3-bisphosphoglycerate-independent phosphoglycerate mutase of Aliarcobacter butzleri (strain RM4018) (Arcobacter butzleri).